A 137-amino-acid polypeptide reads, in one-letter code: Large ribosomal subunit protein uL16 (137 aa).

The protein belongs to the universal ribosomal protein uL16 family. Part of the 50S ribosomal subunit.

Its function is as follows. Binds 23S rRNA and is also seen to make contacts with the A and possibly P site tRNAs. The sequence is that of Large ribosomal subunit protein uL16 from Methylobacterium sp. (strain 4-46).